A 204-amino-acid polypeptide reads, in one-letter code: Calexcitin-1 (204 aa).

EF-hand domains lie at 25-61, 75-110, and 115-150; these read FLVKKWERIFSLFFDRNASHQVDWGDFYLVVKKVRDI, SLAALWEGLCSIADADKDQLISIDEWIGLLKKTDAK, and WFKDYQNFMFKLFDVSCDGVMDLAEYTDGMSTYGFD. The Ca(2+) site is built by Asp-39, Asn-41, Ser-43, Gln-45, Asp-50, Asp-88, Asp-90, Asp-92, Glu-99, Asp-128, Ser-130, Asp-132, and Glu-139.

The chain is Calexcitin-1 (cex-1) from Caenorhabditis elegans.